Here is a 298-residue protein sequence, read N- to C-terminus: ATP phosphoribosyltransferase (298 aa).

It belongs to the ATP phosphoribosyltransferase family. Long subfamily. Requires Mg(2+) as cofactor.

The protein resides in the cytoplasm. The enzyme catalyses 1-(5-phospho-beta-D-ribosyl)-ATP + diphosphate = 5-phospho-alpha-D-ribose 1-diphosphate + ATP. The protein operates within amino-acid biosynthesis; L-histidine biosynthesis; L-histidine from 5-phospho-alpha-D-ribose 1-diphosphate: step 1/9. With respect to regulation, feedback inhibited by histidine. In terms of biological role, catalyzes the condensation of ATP and 5-phosphoribose 1-diphosphate to form N'-(5'-phosphoribosyl)-ATP (PR-ATP). Has a crucial role in the pathway because the rate of histidine biosynthesis seems to be controlled primarily by regulation of HisG enzymatic activity. In Vibrio parahaemolyticus serotype O3:K6 (strain RIMD 2210633), this protein is ATP phosphoribosyltransferase.